The chain runs to 375 residues: Naringenin 7-O-methyltransferase (375 aa).

136 to 142 provides a ligand contact to substrate; the sequence is LNLDKVF. Residues 168-188 form a substrate binding region; the sequence is LFQYLGQDGNEPSNTLFNQAM. S-adenosyl-L-methionine-binding residues include G219, D242, M263, and K276. The active-site Proton acceptor is the H280.

The protein belongs to the class I-like SAM-binding methyltransferase superfamily. Cation-independent O-methyltransferase family. COMT subfamily.

The catalysed reaction is (2S)-naringenin + S-adenosyl-L-methionine = (2S)-sakuranetin + S-adenosyl-L-homocysteine + H(+). Functionally, S-adenosyl-L-methionine-dependent methyltransferase involved in the biosynthesis of the sakuranetin, an inducible defense mechanism of O.sativa against pathogen attack. The chain is Naringenin 7-O-methyltransferase from Oryza sativa subsp. japonica (Rice).